Reading from the N-terminus, the 456-residue chain is Phospholipase A1 member A (456 aa).

A signal peptide spans 1-25; that stretch reads MPPGPWESCFWVGGLLLWLSVGSSG. Ser166 serves as the catalytic Nucleophile. Asp190 acts as the Charge relay system in catalysis. Residues Cys245 and Cys258 are joined by a disulfide bond. His260 serves as the catalytic Charge relay system. 2 disulfide bridges follow: Cys282–Cys293 and Cys296–Cys304. Asn365 is a glycosylation site (N-linked (GlcNAc...) asparagine).

It belongs to the AB hydrolase superfamily. Lipase family.

It is found in the secreted. The catalysed reaction is a 1,2-diacyl-sn-glycero-3-phospho-L-serine + H2O = a 2-acyl-sn-glycero-3-phospho-L-serine + a fatty acid + H(+). It carries out the reaction 1,2-di-(9Z)-octadecenoyl-sn-glycero-3-phospho-L-serine + H2O = 2-(9Z-octadecenoyl)-sn-glycero-3-phospho-L-serine + (9Z)-octadecenoate + H(+). The enzyme catalyses 1-hexadecanoyl-2-(5Z,8Z,11Z,14Z-eicosatetraenoyl)-sn-glycero-3-phospho-L-serine + H2O = 2-(5Z,8Z,11Z,14Z)-eicosatetraenoyl-sn-glycero-3-phospho-L-serine + hexadecanoate + H(+). It catalyses the reaction a 1-acyl-sn-glycero-3-phospho-L-serine + H2O = sn-glycero-3-phospho-L-serine + a fatty acid + H(+). The catalysed reaction is 1-(9Z-octadecenoyl)-sn-glycero-3-phospho-L-serine + H2O = sn-glycero-3-phospho-L-serine + (9Z)-octadecenoate + H(+). Hydrolyzes the ester bond of the acyl group attached at the sn-1 position of phosphatidylserines (phospholipase A1 activity) and 1-acyl-2-lysophosphatidylserines (lysophospholipase activity) in the pathway of phosphatidylserines acyl chain remodeling. Cleaves phosphatidylserines exposed on the outer leaflet of the plasma membrane of apoptotic cells producing 2-acyl-1-lysophosphatidylserines, which in turn enhance mast cell activation and histamine production. Has no activity toward other glycerophospholipids including phosphatidylcholines, phosphatidylethanolamines, phosphatidic acids or phosphatidylinositols, or glycerolipids such as triolein. In Pongo abelii (Sumatran orangutan), this protein is Phospholipase A1 member A (PLA1A).